An 81-amino-acid chain; its full sequence is Conotoxin Lt6.4 (81 aa).

An N-terminal signal peptide occupies residues 1-19 (MKLVLAIVLILMFLSLSAG). Residues 20 to 42 (AETSDNGVSRGGHRPQYWPVTPP) constitute a propeptide that is removed on maturation. 3 disulfide bridges follow: C46-C60, C53-C65, and C59-C80.

It belongs to the conotoxin I3 superfamily. As to expression, expressed by the venom duct.

It is found in the secreted. This is Conotoxin Lt6.4 from Conus litteratus (Lettered cone).